Reading from the N-terminus, the 842-residue chain is Elongation factor 2 (842 aa).

Residues T17–K253 form the tr-type G domain. GTP contacts are provided by residues A26–S33, N158–D161, and S213–L215. Residue H699 is modified to Diphthamide.

Belongs to the TRAFAC class translation factor GTPase superfamily. Classic translation factor GTPase family. EF-G/EF-2 subfamily.

It localises to the cytoplasm. The enzyme catalyses GTP + H2O = GDP + phosphate + H(+). In terms of biological role, catalyzes the GTP-dependent ribosomal translocation step during translation elongation. During this step, the ribosome changes from the pre-translocational (PRE) to the post-translocational (POST) state as the newly formed A-site-bound peptidyl-tRNA and P-site-bound deacylated tRNA move to the P and E sites, respectively. Catalyzes the coordinated movement of the two tRNA molecules, the mRNA and conformational changes in the ribosome. The protein is Elongation factor 2 (EFT1) of Naumovozyma castellii (Yeast).